Here is a 216-residue protein sequence, read N- to C-terminus: MKINTVLFDLDGTLINTNELIISSFLHTLNTYYPDQYKREDVLPFIGPSLHDTFSKIDESKVEELITSYRQFNHDHHDELVEEYETVYETVQELKKQGYKVGIVTTKARQTVEMGLKLSKLDEFFDVVVTIDDVEHVKPHPEPLQKALQLLDAKPEEALMVGDNHHDIVGGQNAGTKTAAVSWTLKGRAYLEAYKPDFMLDKMSDLLPILSDMNRS.

Aspartate 9 serves as the catalytic Nucleophile.

The protein belongs to the HAD-like hydrolase superfamily. PpaX family. Mg(2+) is required as a cofactor.

It carries out the reaction diphosphate + H2O = 2 phosphate + H(+). Functionally, hydrolyzes pyrophosphate formed during P-Ser-HPr dephosphorylation by HPrK/P. Might play a role in controlling the intracellular pyrophosphate pool. This chain is Pyrophosphatase PpaX, found in Bacillus cereus (strain Q1).